The primary structure comprises 124 residues: MSIYETAQQLAQQIKESDEYRDFIVAKELMKADEGHYKMIRDFQMKQFEIQQAQLFQLDISQGKQQELERLYSLLSLNPAAREYLEAEFRISRMINDVQKIIGEAIIDVLPLGFEDNDQPQILA.

This sequence belongs to the UPF0342 family.

This chain is UPF0342 protein DSY2926, found in Desulfitobacterium hafniense (strain Y51).